Consider the following 335-residue polypeptide: Proline-rich protein 1 (335 aa).

The N-terminal stretch at 1 to 22 is a signal peptide; sequence MAITRASFAICILLSLATIATA. 39 repeat units span residues 30–34, 35–39, 40–43, 44–48, 49–53, 54–57, 58–62, 63–67, 68–71, 72–76, 77–81, 82–86, 87–91, 92–96, 97–101, 102–106, 107–110, 111–115, 116–120, 121–125, 126–130, 131–135, 136–139, 140–144, 145–148, 149–153, 154–158, 159–163, 164–167, 168–172, 173–177, 178–182, 184–189, 190–194, 195–200, 201–207, 208–212, 284–288, and 319–323. Residues 30–323 are 39 X 5 AA approximate repeats; sequence PPVYTSPVNK…LFNVGPFYFT (294 aa).

Belongs to the plant proline-rich protein superfamily. ENOD12 family. Exclusively expressed in roots, especially in root hairs.

It localises to the secreted. The protein resides in the cell wall. Its function is as follows. May contribute to cell wall structure in root hairs. In Arabidopsis thaliana (Mouse-ear cress), this protein is Proline-rich protein 1 (PRP1).